The primary structure comprises 274 residues: Mitochondrial outer membrane protein porin 1 (274 aa).

The protein belongs to the eukaryotic mitochondrial porin (TC 1.B.8.1) family. Expressed in shoots and roots. Also expressed in callus, leaves, panicles, sheaths and stems.

It is found in the mitochondrion outer membrane. Its function is as follows. Forms a channel through the mitochondrial outer membrane that allows diffusion of small hydrophilic molecules. The channel adopts an open conformation at low or zero membrane potential and a closed conformation at potentials above 30-40 mV. The open state has a weak anion selectivity whereas the closed state is cation-selective. The sequence is that of Mitochondrial outer membrane protein porin 1 (VDAC1) from Oryza sativa subsp. japonica (Rice).